A 203-amino-acid chain; its full sequence is Small ribosomal subunit protein uS4 (203 aa).

One can recognise an S4 RNA-binding domain in the interval Arg93–Val156.

This sequence belongs to the universal ribosomal protein uS4 family. Part of the 30S ribosomal subunit. Contacts protein S5. The interaction surface between S4 and S5 is involved in control of translational fidelity.

One of the primary rRNA binding proteins, it binds directly to 16S rRNA where it nucleates assembly of the body of the 30S subunit. Its function is as follows. With S5 and S12 plays an important role in translational accuracy. This is Small ribosomal subunit protein uS4 from Streptococcus uberis (strain ATCC BAA-854 / 0140J).